The chain runs to 228 residues: Large ribosomal subunit protein uL3 (228 aa).

The interval 157-176 (CHRHAGGTGMSASPSRTFKG) is disordered.

It belongs to the universal ribosomal protein uL3 family. As to quaternary structure, part of the 50S ribosomal subunit. Forms a cluster with proteins L14 and L19.

In terms of biological role, one of the primary rRNA binding proteins, it binds directly near the 3'-end of the 23S rRNA, where it nucleates assembly of the 50S subunit. In Rhodopirellula baltica (strain DSM 10527 / NCIMB 13988 / SH1), this protein is Large ribosomal subunit protein uL3.